The chain runs to 251 residues: Hydroxyacylglutathione hydrolase (251 aa).

Zn(2+) is bound by residues His-53, His-55, Asp-57, His-58, His-110, Asp-127, and His-165.

This sequence belongs to the metallo-beta-lactamase superfamily. Glyoxalase II family. As to quaternary structure, monomer. Zn(2+) is required as a cofactor.

The catalysed reaction is an S-(2-hydroxyacyl)glutathione + H2O = a 2-hydroxy carboxylate + glutathione + H(+). It participates in secondary metabolite metabolism; methylglyoxal degradation; (R)-lactate from methylglyoxal: step 2/2. Functionally, thiolesterase that catalyzes the hydrolysis of S-D-lactoyl-glutathione to form glutathione and D-lactic acid. This Shigella boydii serotype 18 (strain CDC 3083-94 / BS512) protein is Hydroxyacylglutathione hydrolase.